We begin with the raw amino-acid sequence, 788 residues long: DNA ligase (788 aa).

NAD(+) contacts are provided by residues 35 to 39 (DAEYD), 84 to 85 (SL), and glutamate 124. Lysine 126 serves as the catalytic N6-AMP-lysine intermediate. The NAD(+) site is built by arginine 147, glutamate 184, lysine 300, and lysine 324. Zn(2+)-binding residues include cysteine 418, cysteine 421, cysteine 448, and cysteine 454. The 82-residue stretch at 707-788 (AEGLPLAGQT…FIERLAQLGS (82 aa)) folds into the BRCT domain.

It belongs to the NAD-dependent DNA ligase family. LigA subfamily. Mg(2+) is required as a cofactor. Requires Mn(2+) as cofactor.

The catalysed reaction is NAD(+) + (deoxyribonucleotide)n-3'-hydroxyl + 5'-phospho-(deoxyribonucleotide)m = (deoxyribonucleotide)n+m + AMP + beta-nicotinamide D-nucleotide.. In terms of biological role, DNA ligase that catalyzes the formation of phosphodiester linkages between 5'-phosphoryl and 3'-hydroxyl groups in double-stranded DNA using NAD as a coenzyme and as the energy source for the reaction. It is essential for DNA replication and repair of damaged DNA. The protein is DNA ligase of Stutzerimonas stutzeri (strain A1501) (Pseudomonas stutzeri).